Consider the following 426-residue polypeptide: Serine/threonine-protein kinase ssn3 (426 aa).

A Protein kinase domain is found at 41 to 368 (YHIVGFISSG…AQEALEHPYF (328 aa)). ATP is bound by residues 47–55 (ISSGTYGRV) and Lys71. Asp173 functions as the Proton acceptor in the catalytic mechanism. Residues 390-426 (RVTQDDNDIRSGSLPGTKRSGLPDDSLMGRAAKRLKE) form a disordered region.

This sequence belongs to the protein kinase superfamily. CMGC Ser/Thr protein kinase family. CDC2/CDKX subfamily. In terms of assembly, component of the srb8-11 complex, a regulatory module of the Mediator complex. Mg(2+) is required as a cofactor.

It localises to the nucleus. The enzyme catalyses L-seryl-[protein] + ATP = O-phospho-L-seryl-[protein] + ADP + H(+). The catalysed reaction is L-threonyl-[protein] + ATP = O-phospho-L-threonyl-[protein] + ADP + H(+). It catalyses the reaction [DNA-directed RNA polymerase] + ATP = phospho-[DNA-directed RNA polymerase] + ADP + H(+). In terms of biological role, component of the srb8-11 complex. The srb8-11 complex is a regulatory module of the Mediator complex which is itself involved in regulation of basal and activated RNA polymerase II-dependent transcription. The srb8-11 complex may be involved in the transcriptional repression of a subset of genes regulated by Mediator. It may inhibit the association of the Mediator complex with RNA polymerase II to form the holoenzyme complex. The srb8-11 complex phosphorylates the C-terminal domain (CTD) of the largest subunit of RNA polymerase II. In Aspergillus clavatus (strain ATCC 1007 / CBS 513.65 / DSM 816 / NCTC 3887 / NRRL 1 / QM 1276 / 107), this protein is Serine/threonine-protein kinase ssn3 (ssn3).